The sequence spans 152 residues: Protein PLANT CADMIUM RESISTANCE 2 (152 aa).

Residues 57–79 (TAGALYALIAVVTGCACIYSCFY) traverse the membrane as a helical segment.

This sequence belongs to the cornifelin family. Homooligomer. In terms of tissue distribution, expressed in roots, leaves, shoots, stems, flowers and siliques. In leaves, restricted mainly to the vascular tissue. Expressed in all cells in the root tip, in the vascular tissue and the epidermis in the elongation zone, and only in the epidermal cells in the root hair zone.

It is found in the cell membrane. In terms of biological role, zinc transporter acting in both zinc extrusion and long-distance zinc transport. Involved in the loading of zinc into the xyleme and in the detoxification of excess zinc at the epidermal cells. Acts independently from the zinc transporters HMA2 and HMA4. May be also involved in cadmium resistance. In Arabidopsis thaliana (Mouse-ear cress), this protein is Protein PLANT CADMIUM RESISTANCE 2 (PCR2).